The primary structure comprises 509 residues: Heat shock 70 kDa protein 14 (509 aa).

Belongs to the heat shock protein 70 family. In terms of assembly, component of ribosome-associated complex (RAC), a heterodimer composed of Hsp70/DnaK-type chaperone HSPA14 and Hsp40/DnaJ-type chaperone DNAJC2.

Its subcellular location is the cytoplasm. It is found in the cytosol. Functionally, component of the ribosome-associated complex (RAC), a complex involved in folding or maintaining nascent polypeptides in a folding-competent state. In the RAC complex, binds to the nascent polypeptide chain, while DNAJC2 stimulates its ATPase activity. This is Heat shock 70 kDa protein 14 (HSPA14) from Macaca fascicularis (Crab-eating macaque).